The primary structure comprises 67 residues: Large ribosomal subunit protein bL35 (67 aa).

Positions 1–41 are disordered; the sequence is MPKMKTHRGAAKRFKKTGTGKLKRSHAYTSHMFRHKSQKQK.

The protein belongs to the bacterial ribosomal protein bL35 family.

In Shouchella clausii (strain KSM-K16) (Alkalihalobacillus clausii), this protein is Large ribosomal subunit protein bL35.